Here is a 758-residue protein sequence, read N- to C-terminus: Relaxin receptor 1 (758 aa).

Residues 1 to 409 lie on the Extracellular side of the membrane; that stretch reads MTSGPFFFCI…ENLLASIIQR (409 aa). The 38-residue stretch at 26–63 folds into the LDL-receptor class A domain; the sequence is SCPLGSFPCGNMSRCLPQLLHCNGVDDCGNRADEDHCG. Intrachain disulfides connect cysteine 27-cysteine 40, cysteine 34-cysteine 53, and cysteine 47-cysteine 62. Residue asparagine 36 is glycosylated (N-linked (GlcNAc...) asparagine). Ca(2+) contacts are provided by leucine 45, asparagine 48, valine 50, aspartate 52, aspartate 58, and glutamate 59. Asparagine 127 is a glycosylation site (N-linked (GlcNAc...) asparagine). LRR repeat units follow at residues 127–148, 151–172, 175–196, 199–220, 223–244, 248–269, 272–293, 296–317, 320–341, and 344–365; these read NVTV…GFRK, ELQK…AFRG, SLTK…VFED, RLEW…TFYG, SLIL…PLCQ, RLHW…TFIS, NLTV…AFTH, KLDE…IFKD, ELSQ…QFDC, and KLKS…MFRP. N-linked (GlcNAc...) asparagine glycans are attached at residues asparagine 264 and asparagine 272. An N-linked (GlcNAc...) asparagine glycan is attached at asparagine 325. Asparagine 368 is a glycosylation site (N-linked (GlcNAc...) asparagine). A helical transmembrane segment spans residues 410-430; it reads VFVWVVSAITCFGNIFVICMR. The Cytoplasmic portion of the chain corresponds to 431–443; the sequence is PYIRSENKLHAMS. Residues 444 to 464 traverse the membrane as a helical segment; that stretch reads IISLCCADCLMGVYLFVIGAF. Residues 465–486 are Extracellular-facing; the sequence is DLKFRGEYNKHAQPWMESVHCQ. A disulfide bond links cysteine 485 and cysteine 563. The helical transmembrane segment at 487-507 threads the bilayer; it reads FMGSLAILSTEVSVLLLTFLT. Over 508 to 527 the chain is Cytoplasmic; sequence LEKYICIVYPFRCLRPRKCR. The chain crosses the membrane as a helical span at residues 528 to 548; sequence TITVLIFIWIIGFIVAFAPLG. The Extracellular portion of the chain corresponds to 549-577; that stretch reads NKEFFKNYYGTNGVCFPLHSEDTGSTGAQ. Residues 578-598 traverse the membrane as a helical segment; the sequence is IYSVVIFLGINLVAFIIIVFS. At 599–629 the chain is on the cytoplasmic side; sequence YGSMFYSVHQSSVTVTEIQKQVKKEVVLAKR. The helical transmembrane segment at 630-650 threads the bilayer; sequence FFFIVFTDALCWIPIFILKFL. Serine 651 is a topological domain (extracellular). Residues 652–672 traverse the membrane as a helical segment; it reads LLQVEIPDSITSWVVIFILPI. Topologically, residues 673–758 are cytoplasmic; that stretch reads NSALNPIIYT…SQSSRLNSYS (86 aa).

This sequence belongs to the G-protein coupled receptor 1 family. Interacts with C1QTNF8.

It localises to the cell membrane. In terms of biological role, receptor for relaxins. The activity of this receptor is mediated by G proteins leading to stimulation of adenylate cyclase and an increase of cAMP. Binding of the ligand may also activate a tyrosine kinase pathway that inhibits the activity of a phosphodiesterase that degrades cAMP. This Mus musculus (Mouse) protein is Relaxin receptor 1 (Rxfp1).